A 122-amino-acid chain; its full sequence is Large ribosomal subunit protein uL14c (122 aa).

This sequence belongs to the universal ribosomal protein uL14 family. In terms of assembly, part of the 50S ribosomal subunit.

It localises to the plastid. The protein localises to the chloroplast. Binds to 23S rRNA. In Nicotiana sylvestris (Wood tobacco), this protein is Large ribosomal subunit protein uL14c.